The following is a 260-amino-acid chain: Carbonic anhydrase 3 (260 aa).

Alanine 2 bears the N-acetylalanine mark. In terms of domain architecture, Alpha-carbonic anhydrase spans 3 to 259 (KEWGYASHNG…INNRVVRASF (257 aa)). Serine 29, serine 43, serine 48, serine 50, and serine 55 each carry phosphoserine. Positions 64-67 (KTCR) are involved in proton transfer. The residue at position 73 (threonine 73) is a Phosphothreonine. Zn(2+) is bound by residues histidine 94, histidine 96, and histidine 119. Tyrosine 127 carries the phosphotyrosine modification. Threonine 129 and threonine 176 each carry phosphothreonine. S-glutathionyl cysteine occurs at positions 182 and 187. Position 198 to 199 (198 to 199 (TT)) interacts with substrate. Threonine 216 bears the Phosphothreonine mark. Residue serine 219 is modified to Phosphoserine.

This sequence belongs to the alpha-carbonic anhydrase family. The cofactor is Zn(2+). In terms of processing, S-thiolated both by thiol-disulfide exchange with glutathione disulfide and by oxyradical-initiated S-thiolation with reduced glutathione. S-glutathionylated in hepatocytes under oxidative stress. In terms of tissue distribution, muscle specific.

It is found in the cytoplasm. The enzyme catalyses hydrogencarbonate + H(+) = CO2 + H2O. Its activity is regulated as follows. Activated by proton donors such as imidazole and the dipeptide histidylhistidine. Inhibited by coumarins and sulfonamide derivatives such as acetazolamide. Its function is as follows. Reversible hydration of carbon dioxide. In Homo sapiens (Human), this protein is Carbonic anhydrase 3.